A 176-amino-acid chain; its full sequence is Peptide deformylase 2 (176 aa).

Fe cation contacts are provided by Cys99 and His141. Glu142 is a catalytic residue. Fe cation is bound at residue His145.

It belongs to the polypeptide deformylase family. It depends on Fe(2+) as a cofactor.

The enzyme catalyses N-terminal N-formyl-L-methionyl-[peptide] + H2O = N-terminal L-methionyl-[peptide] + formate. Removes the formyl group from the N-terminal Met of newly synthesized proteins. Requires at least a dipeptide for an efficient rate of reaction. N-terminal L-methionine is a prerequisite for activity but the enzyme has broad specificity at other positions. In Bordetella bronchiseptica (strain ATCC BAA-588 / NCTC 13252 / RB50) (Alcaligenes bronchisepticus), this protein is Peptide deformylase 2.